A 499-amino-acid chain; its full sequence is Glutamate--tRNA ligase (499 aa).

The 'HIGH' region motif lies at 10–20 (PSPTGTPHVGM). Residues 255–259 (KLSKR) carry the 'KMSKS' region motif. An ATP-binding site is contributed by Lys258.

This sequence belongs to the class-I aminoacyl-tRNA synthetase family. Glutamate--tRNA ligase type 1 subfamily. Monomer.

Its subcellular location is the cytoplasm. It catalyses the reaction tRNA(Glu) + L-glutamate + ATP = L-glutamyl-tRNA(Glu) + AMP + diphosphate. In terms of biological role, catalyzes the attachment of glutamate to tRNA(Glu) in a two-step reaction: glutamate is first activated by ATP to form Glu-AMP and then transferred to the acceptor end of tRNA(Glu). The polypeptide is Glutamate--tRNA ligase (Corynebacterium urealyticum (strain ATCC 43042 / DSM 7109)).